The chain runs to 66 residues: Large ribosomal subunit protein bL35 (66 aa).

This sequence belongs to the bacterial ribosomal protein bL35 family.

In Brucella anthropi (strain ATCC 49188 / DSM 6882 / CCUG 24695 / JCM 21032 / LMG 3331 / NBRC 15819 / NCTC 12168 / Alc 37) (Ochrobactrum anthropi), this protein is Large ribosomal subunit protein bL35.